Reading from the N-terminus, the 343-residue chain is Flagellar motor switch protein FliG (343 aa).

The short motif at 137–140 is the Part of the EHPQR-motif element; the sequence is EHPQ. Residues 245–248 carry the M-F-X-F motif; its intrinsic flexibility is probably coupled to flagellar rotation motif; it reads MFTF.

It belongs to the FliG family.

The protein resides in the cell inner membrane. It localises to the bacterial flagellum basal body. Functionally, one of the proteins that forms a switch complex that is proposed to be located at the base of the basal body. This complex interacts with chemotaxis proteins (such as CheY) in addition to contacting components of the motor that determine the direction of flagellar rotation. Required for flagellum synthesis and motility. In H.pylori four flagellar switch proteins are encoded, FliG, FliM, FliN and FliY. The protein is Flagellar motor switch protein FliG of Helicobacter pylori (strain ATCC 700392 / 26695) (Campylobacter pylori).